The following is a 78-amino-acid chain: MGMPSMPELLIILLIVVLLFGAKKIPELAKGLGSGIKNFKKAMKEDEEEVATENKKEIEEKTTASTTKTTADQDTTKA.

A helical membrane pass occupies residues 1-21 (MGMPSMPELLIILLIVVLLFG). Residues 46-78 (DEEEVATENKKEIEEKTTASTTKTTADQDTTKA) form a disordered region. Basic and acidic residues predominate over residues 52–62 (TENKKEIEEKT). The segment covering 63–78 (TASTTKTTADQDTTKA) has biased composition (low complexity).

Belongs to the TatA/E family. In terms of assembly, the Tat system comprises two distinct complexes: a TatABC complex, containing multiple copies of TatA, TatB and TatC subunits, and a separate TatA complex, containing only TatA subunits. Substrates initially bind to the TatABC complex, which probably triggers association of the separate TatA complex to form the active translocon.

It localises to the cell inner membrane. Functionally, part of the twin-arginine translocation (Tat) system that transports large folded proteins containing a characteristic twin-arginine motif in their signal peptide across membranes. TatA could form the protein-conducting channel of the Tat system. In Nitratiruptor sp. (strain SB155-2), this protein is Sec-independent protein translocase protein TatA.